The following is a 541-amino-acid chain: Presenilin homolog (541 aa).

Composition is skewed to polar residues over residues 1-14 (MAAV…SSGL) and 43-52 (NNYGSSNQDQ). Disordered stretches follow at residues 1 to 52 (MAAV…NQDQ) and 69 to 92 (CGSR…NEME). The Cytoplasmic segment spans residues 1–106 (MAAVNLQASC…LKYGAQHVIK (106 aa)). The helical transmembrane segment at 107–127 (LFVPVSLCMLVVVATINSISF) threads the bilayer. The Lumenal segment spans residues 128-154 (YNSTDVYLLYTPFHEQSPEPSVKFWSA). Residue N129 is glycosylated (N-linked (GlcNAc...) asparagine). Residues 155–175 (LANSLILMSVVVVMTFLLIVL) traverse the membrane as a helical segment. Residues 176-182 (YKKRCYR) are Cytoplasmic-facing. Residues 183 to 203 (IIHGWLILSSFMLLFIFTYLY) traverse the membrane as a helical segment. The Lumenal portion of the chain corresponds to 204 to 216 (LEELLRAYNIPMD). Residues 217–237 (YPTALLIMWNFGVVGMMSIHW) form a helical membrane-spanning segment. Topologically, residues 238-242 (QGPLR) are cytoplasmic. Residues 243–263 (LQQGYLIFVAALMALVFIKYL) form a helical membrane-spanning segment. The Lumenal segment spans residues 264 to 265 (PE). Residues 266-286 (WTAWAVLAAISIWDLIAVLSP) form a helical membrane-spanning segment. D279 is a catalytic residue. The Cytoplasmic segment spans residues 287–453 (RGPLRILVET…QNHPDGQEER (167 aa)). The interval 320–481 (NTVTPQQSQA…ASSYGDWTTT (162 aa)) is interaction with Mettl2. A compositionally biased stretch (low complexity) spans 327–350 (SQATASSSPSSSNSTTTTRATQNS). Disordered stretches follow at residues 327 to 379 (SQAT…DGSV) and 421 to 449 (EVQS…HPDG). Polar residues-rich tracts occupy residues 361–370 (GQRTGNSHPR) and 421–443 (EVQS…TAPD). Residues 454–474 (GIKLGLGDFIFYSVLVGKASS) traverse the membrane as a helical segment. D461 is an active-site residue. Residues 475 to 481 (YGDWTTT) are Lumenal-facing. The chain crosses the membrane as a helical span at residues 482–502 (IACFVAILIGLCLTLLLLAIW). Residues 503-506 (RKAL) are Cytoplasmic-facing. The short motif at 507–509 (PAL) is the PAL element. The segment at residues 507 to 527 (PALPISITFGLIFCFATSAVV) is an intramembrane region (helical). Residues 528 to 541 (KPFMEDLSAKQVFI) are Cytoplasmic-facing.

Belongs to the peptidase A22A family. Homodimer. Component of the gamma-secretase complex, a complex composed of a presenilin (Psn) homodimer, nicastrin (Nct), Aph-1 and Pen-2. Interacts with Mettl2. Isoform 2 shows a better interaction with Mettl2 than isoform 1. In terms of processing, cleaved. The cleavage, which probably takes place between the 6th and the 7th transmembrane regions, may be required for activation of the gamma-secretase activity. In terms of tissue distribution, maternally expressed in nurse and follicle cells. In early embryos, expressed in all or most cells and later increases in CNS and epidermal tissues. In larvae, expression is seen in all imaginal disks, brain and optic lobes. In pupae, expression is seen in eye disk and brain.

The protein resides in the endoplasmic reticulum membrane. Its subcellular location is the golgi apparatus membrane. Functionally, probable catalytic subunit of the gamma-secretase complex, an endoprotease complex that catalyzes the intramembrane cleavage of integral membrane proteins such as Notch receptor. Required for S3 cleavage of Notch, which releases activated Notch protein from the cell membrane. Involved in the patterning of the optic lobes. The protein is Presenilin homolog (Psn) of Drosophila melanogaster (Fruit fly).